The following is a 193-amino-acid chain: Large ribosomal subunit protein uL5 (193 aa).

It belongs to the universal ribosomal protein uL5 family. In terms of assembly, part of the 50S ribosomal subunit; part of the 5S rRNA/L5/L18/L25 subcomplex. Contacts the 5S rRNA and the P site tRNA. Forms a bridge to the 30S subunit in the 70S ribosome.

In terms of biological role, this is one of the proteins that bind and probably mediate the attachment of the 5S RNA into the large ribosomal subunit, where it forms part of the central protuberance. In the 70S ribosome it contacts protein S13 of the 30S subunit (bridge B1b), connecting the 2 subunits; this bridge is implicated in subunit movement. Contacts the P site tRNA; the 5S rRNA and some of its associated proteins might help stabilize positioning of ribosome-bound tRNAs. The sequence is that of Large ribosomal subunit protein uL5 from Corynebacterium urealyticum (strain ATCC 43042 / DSM 7109).